Consider the following 189-residue polypeptide: MIDEIKAQLDSHQKVMESVKGELAPKIAAVADLLVDALGNGKKLLVMGNGGSAADAQHFAAEIVGRFKMERRGLPAIALTTDTSILTAIGNDYGFEQIFRRQIEALACEGDVVVGISTSGTSKNVHGALLLADQVGCRTIGLLGKDGGTIREIVDVDLTVSCDDTPRVQEGHITIIHIICDLLEKRLFG.

The SIS domain maps to 34-189 (LVDALGNGKK…CDLLEKRLFG (156 aa)). A substrate-binding site is contributed by 49-51 (NGG). Residues H58 and E62 each coordinate Zn(2+). Residues E62, 91–92 (ND), 117–119 (STS), S122, and Q169 each bind substrate. Zn(2+)-binding residues include Q169 and H177.

This sequence belongs to the SIS family. GmhA subfamily. Homotetramer. Zn(2+) is required as a cofactor.

It is found in the cytoplasm. It catalyses the reaction 2 D-sedoheptulose 7-phosphate = D-glycero-alpha-D-manno-heptose 7-phosphate + D-glycero-beta-D-manno-heptose 7-phosphate. Its pathway is carbohydrate biosynthesis; D-glycero-D-manno-heptose 7-phosphate biosynthesis; D-glycero-alpha-D-manno-heptose 7-phosphate and D-glycero-beta-D-manno-heptose 7-phosphate from sedoheptulose 7-phosphate: step 1/1. Catalyzes the isomerization of sedoheptulose 7-phosphate in D-glycero-D-manno-heptose 7-phosphate. The sequence is that of Phosphoheptose isomerase from Geotalea uraniireducens (strain Rf4) (Geobacter uraniireducens).